The sequence spans 601 residues: Deuterosome assembly protein 1 (601 aa).

Coiled-coil stretches lie at residues 14–59 (CEAE…NAQT), 86–196 (TQNY…GKKQ), and 226–277 (IEKL…ELQS). The disordered stretch occupies residues 305–329 (AQDNRKRVESSYSPSPKEAERKRKE). The stretch at 354 to 397 (EEGLCSEQERLRSEISELTQELHQKEVTIATVMKKAALLERQLK) forms a coiled coil. A Phosphoserine modification is found at S544. Residues 555 to 586 (AAQHFLMEEERRAKELEKLLNTHIDELQRHTE) are a coiled coil.

The protein belongs to the CEP63 family. As to quaternary structure, interacts with CEP152; the interaction is mutually exclusive with CEP63. As to expression, highly enriched in multicilia-abundant tissues (trachea and oviduct).

Its subcellular location is the cytoplasm. Its function is as follows. Key structural component of the deuterosome, a structure that promotes de novo centriole amplification in multiciliated cells. Deuterosome-mediated centriole amplification occurs in terminally differentiated multiciliated cells and can generate more than 100 centrioles. Probably sufficient for the specification and formation of the deuterosome inner core. Interacts with CEP152 and recruits PLK4 to activate centriole biogenesis. The sequence is that of Deuterosome assembly protein 1 from Mus musculus (Mouse).